A 208-amino-acid polypeptide reads, in one-letter code: Protein GrpE (208 aa).

Residues Met-1–Ala-25 show a composition bias toward basic and acidic residues. Residues Met-1 to Ser-38 form a disordered region. Residues Asn-29–Ser-38 are compositionally biased toward acidic residues.

This sequence belongs to the GrpE family. Homodimer.

It localises to the cytoplasm. Its function is as follows. Participates actively in the response to hyperosmotic and heat shock by preventing the aggregation of stress-denatured proteins, in association with DnaK and GrpE. It is the nucleotide exchange factor for DnaK and may function as a thermosensor. Unfolded proteins bind initially to DnaJ; upon interaction with the DnaJ-bound protein, DnaK hydrolyzes its bound ATP, resulting in the formation of a stable complex. GrpE releases ADP from DnaK; ATP binding to DnaK triggers the release of the substrate protein, thus completing the reaction cycle. Several rounds of ATP-dependent interactions between DnaJ, DnaK and GrpE are required for fully efficient folding. This Clostridium perfringens (strain 13 / Type A) protein is Protein GrpE.